The sequence spans 321 residues: uncharacterized protein (321 aa).

Residues 1-6 (MDIIRK) lie on the Extracellular side of the membrane. Residues 7 to 29 (ISHFAGQTFGIWVIVFAVLGFSF) form a helical membrane-spanning segment. Topologically, residues 30–34 (PSLFT) are cytoplasmic. Residues 35–57 (WISSYITIFLGIIMFGMGLTLQA) traverse the membrane as a helical segment. The Extracellular segment spans residues 58–69 (DDFKELVRKPWQ). Residues 70-92 (VIIGVIAQYTIMPLVAFGLAFGL) form a helical membrane-spanning segment. The Cytoplasmic portion of the chain corresponds to 93–97 (HLPAE). A helical membrane pass occupies residues 98–120 (IAVGVILVGCCPGGTASNVMTFL). At 121–129 (AKGNTALSV) the chain is on the extracellular side. The chain crosses the membrane as a helical span at residues 130–150 (AVTTISTLLAPVVTPLLIMLF). Residues 151–159 (AKEWLPVSP) are Cytoplasmic-facing. Residues 160-180 (GSLFISILQAVLFPIIAGLIV) traverse the membrane as a helical segment. At 181–190 (KMFFRKQVAK) the chain is on the extracellular side. A helical membrane pass occupies residues 191–211 (AVHALPLVSVIGIVAIVSAVV). The Cytoplasmic portion of the chain corresponds to 212–221 (SGNRENLLQS). A helical transmembrane segment spans residues 222-242 (GLLIFSVVILHNGIGYLLGFL). The Extracellular portion of the chain corresponds to 243–267 (CAKLLKMDYPSQKAIAIEVGMQNSG). The helical transmembrane segment at 268–288 (LGAALATAHFSPLSAVPSAIF) threads the bilayer. Residues 289–321 (SVWHNLSGSMLATYWSKKVKKKQAGSKSSNLSL) lie on the Cytoplasmic side of the membrane.

This sequence belongs to the bile acid:sodium symporter (BASS) (TC 2.A.28) family.

It is found in the cell membrane. This is an uncharacterized protein from Bacillus subtilis (strain 168).